A 647-amino-acid polypeptide reads, in one-letter code: Microtubule-associated protein 9 (647 aa).

Ser2 is modified (N-acetylserine). Tyr12 carries the phosphotyrosine modification. Disordered stretches follow at residues 127–323, 344–421, 491–514, 530–553, 580–600, and 613–647; these read KSFS…ELIM, SATA…PDRA, KRLEEKNKKKTEEENAARKGEALQ, KNRKEREYERAKKQKEEETVAEKK, NEKRKEELKRAEKKDKDKQAI, and QERIERKQKKRHSFLESEALPPWSPPSRTVFAKVF. Residues 133 to 145 are compositionally biased toward basic and acidic residues; that stretch reads QNKDEEFEKDKIK. Residues 155–166 are compositionally biased toward polar residues; it reads IKSTSSAENNSL. Over residues 174–186 the composition is skewed to basic residues; sequence PSPRPRSMLKKKS. Residues 184–210 are a coiled coil; the sequence is KKSHMEEKDGLEDKETALSEELELHSA. A compositionally biased stretch (basic and acidic residues) spans 187–200; the sequence is HMEEKDGLEDKETA. 2 stretches are compositionally biased toward polar residues: residues 210 to 219 and 239 to 249; these read APSSLPTPNG and CLTSLASSSLK. The segment covering 268–287 has biased composition (basic and acidic residues); that stretch reads DPNEEITENHNSLKSDENKE. Residues 298-328 are a coiled coil; sequence AVEKSKESQVTADDLEEEKAKAELIMDDDRT. Positions 365 to 374 are enriched in low complexity; the sequence is NNRASSASAR. Residues 443–628 adopt a coiled-coil conformation; it reads MHRIKRIESE…KQKKRHSFLE (186 aa).

In terms of assembly, binds to purified microtubules via its C-terminus.

The protein localises to the cytoplasm. Its subcellular location is the cytoskeleton. The protein resides in the spindle. Involved in organization of the bipolar mitotic spindle. Required for bipolar spindle assembly, mitosis progression and cytokinesis. May act by stabilizing interphase microtubules. The chain is Microtubule-associated protein 9 (MAP9) from Homo sapiens (Human).